The chain runs to 281 residues: Nhr-229 coiled coil domain containing nccd-1 (281 aa).

This chain is Nhr-229 coiled coil domain containing nccd-1, found in Caenorhabditis elegans.